The sequence spans 640 residues: tRNA uridine 5-carboxymethylaminomethyl modification enzyme MnmG (640 aa).

Residue Gly9–Gly14 participates in FAD binding. Gly289 to Phe303 contacts NAD(+).

Belongs to the MnmG family. Homodimer. Heterotetramer of two MnmE and two MnmG subunits. It depends on FAD as a cofactor.

Its subcellular location is the cytoplasm. Its function is as follows. NAD-binding protein involved in the addition of a carboxymethylaminomethyl (cmnm) group at the wobble position (U34) of certain tRNAs, forming tRNA-cmnm(5)s(2)U34. This chain is tRNA uridine 5-carboxymethylaminomethyl modification enzyme MnmG, found in Campylobacter hominis (strain ATCC BAA-381 / DSM 21671 / CCUG 45161 / LMG 19568 / NCTC 13146 / CH001A).